A 159-amino-acid polypeptide reads, in one-letter code: MQKRAIYPGTFDPITNGHLDIVTRATQMFDHVILAIAASPGKNPMFTLDERVALAQKATAHLSNVEVAGFSDLMANFARDRQANILIRGLRAVADFEYEMQLAHMNRHLMPQLESVFLMPSKEWSFISSSLVKEVARHQGDVTHFLPDNVHQALMNKLK.

Thr-10 contributes to the substrate binding site. Residues 10–11 and His-18 contribute to the ATP site; that span reads TF. 3 residues coordinate substrate: Lys-42, Met-74, and Arg-88. ATP contacts are provided by residues 89–91, Glu-99, and 124–130; these read GLR and WSFISSS.

It belongs to the bacterial CoaD family. Homohexamer. Mg(2+) is required as a cofactor.

It localises to the cytoplasm. The enzyme catalyses (R)-4'-phosphopantetheine + ATP + H(+) = 3'-dephospho-CoA + diphosphate. Its pathway is cofactor biosynthesis; coenzyme A biosynthesis; CoA from (R)-pantothenate: step 4/5. Functionally, reversibly transfers an adenylyl group from ATP to 4'-phosphopantetheine, yielding dephospho-CoA (dPCoA) and pyrophosphate. This is Phosphopantetheine adenylyltransferase from Salmonella arizonae (strain ATCC BAA-731 / CDC346-86 / RSK2980).